Consider the following 126-residue polypeptide: uncharacterized protein (126 aa).

This is an uncharacterized protein from Columba livia (Rock dove).